Reading from the N-terminus, the 451-residue chain is Phosphoglucosamine mutase (451 aa).

Residue S102 is the Phosphoserine intermediate of the active site. S102, D243, D245, and D247 together coordinate Mg(2+). S102 is modified (phosphoserine).

It belongs to the phosphohexose mutase family. The cofactor is Mg(2+). In terms of processing, activated by phosphorylation.

It catalyses the reaction alpha-D-glucosamine 1-phosphate = D-glucosamine 6-phosphate. Functionally, catalyzes the conversion of glucosamine-6-phosphate to glucosamine-1-phosphate. This chain is Phosphoglucosamine mutase, found in Brucella anthropi (strain ATCC 49188 / DSM 6882 / CCUG 24695 / JCM 21032 / LMG 3331 / NBRC 15819 / NCTC 12168 / Alc 37) (Ochrobactrum anthropi).